Here is a 396-residue protein sequence, read N- to C-terminus: Ribosomal RNA large subunit methyltransferase I (396 aa).

In terms of domain architecture, PUA spans 2–79; the sequence is SIRIKLKPGR…KEEAIDRDFF (78 aa).

It belongs to the methyltransferase superfamily. RlmI family.

The protein localises to the cytoplasm. The enzyme catalyses cytidine(1962) in 23S rRNA + S-adenosyl-L-methionine = 5-methylcytidine(1962) in 23S rRNA + S-adenosyl-L-homocysteine + H(+). Functionally, specifically methylates the cytosine at position 1962 (m5C1962) of 23S rRNA. The protein is Ribosomal RNA large subunit methyltransferase I of Shewanella amazonensis (strain ATCC BAA-1098 / SB2B).